The primary structure comprises 534 residues: Phosphoenolpyruvate carboxykinase (ATP) (534 aa).

3 residues coordinate substrate: arginine 59, tyrosine 200, and lysine 206. ATP-binding positions include lysine 206, histidine 225, and 242–250 (GLSGTGKTT). Positions 206 and 225 each coordinate Mn(2+). Aspartate 263 provides a ligand contact to Mn(2+). Residues glutamate 291, arginine 327, 443–444 (RI), and threonine 449 each bind ATP. Arginine 327 provides a ligand contact to substrate.

Belongs to the phosphoenolpyruvate carboxykinase (ATP) family. Mn(2+) serves as cofactor.

The protein resides in the cytoplasm. It carries out the reaction oxaloacetate + ATP = phosphoenolpyruvate + ADP + CO2. It participates in carbohydrate biosynthesis; gluconeogenesis. Functionally, involved in the gluconeogenesis. Catalyzes the conversion of oxaloacetate (OAA) to phosphoenolpyruvate (PEP) through direct phosphoryl transfer between the nucleoside triphosphate and OAA. The protein is Phosphoenolpyruvate carboxykinase (ATP) of Agathobacter rectalis (strain ATCC 33656 / DSM 3377 / JCM 17463 / KCTC 5835 / VPI 0990) (Eubacterium rectale).